The following is a 227-amino-acid chain: Protein LppM (227 aa).

The N-terminal stretch at 1 to 24 (MARTRRRGMLAIAMLLMLVPLATG) is a signal peptide. Cys-25 carries the N-palmitoyl cysteine lipid modification. Cys-25 carries S-diacylglycerol cysteine lipidation. Residues 26 to 185 (LRVRASITIS…ARYTDPNTRS (160 aa)) form an important for bacterial uptake by host macrophages region. A helical transmembrane segment spans residues 190 to 210 (GIWLGIAAFAAAGVVAVLAWI).

A shorter form (about 20 kDa) is secreted; upon overexpression of the whole protein in M.smegmatis the C-terminus of the short form is about residue 187, suggesting it is generated by cleavage of the protein before its C-terminal transmembrane domain.

The protein localises to the membrane. It localises to the secreted. The protein resides in the cell wall. In terms of biological role, a putative lipoprotein that seems to be specialized for the initial steps of macrophage infection. A non-acylated fragment (residues 26-185) binds phosphatidyl-myo-inositol mannosides (PIMs). Limits, in a TLR2-dependent fashion, bacterial uptake by host (mouse); this effect may be mediated by nonacylated fragment 26-185. Plays a TLR2-dependent role in host phagosome maturation arrest. Plays a TLR2-independent role in chemokine production during the first 24 hours of mouse infection. This chain is Protein LppM (lppM), found in Mycobacterium tuberculosis (strain ATCC 25618 / H37Rv).